Consider the following 415-residue polypeptide: Serine/threonine transporter SstT (415 aa).

The next 8 helical transmembrane spans lie at 23–43, 47–67, 85–105, 144–164, 181–201, 220–240, 293–313, and 333–353; these read ILIGLVLGVLLALVSKPAAIA, LGTLFVGALKAVAPVLVLMLV, ILFLYLLGTFSAALTAVLFSF, ALLNANYIGILVWAVGLGFAL, AVTFIVKVVIRFAPLGIFGLV, LLVLVGCMLLVALVINPLLVF, IPLGATINMAGAAITITVLTL, and VVASLCACGASGVAGGSLLLI.

This sequence belongs to the dicarboxylate/amino acid:cation symporter (DAACS) (TC 2.A.23) family.

The protein resides in the cell inner membrane. It catalyses the reaction L-serine(in) + Na(+)(in) = L-serine(out) + Na(+)(out). The enzyme catalyses L-threonine(in) + Na(+)(in) = L-threonine(out) + Na(+)(out). In terms of biological role, involved in the import of serine and threonine into the cell, with the concomitant import of sodium (symport system). The protein is Serine/threonine transporter SstT of Klebsiella pneumoniae subsp. pneumoniae (strain ATCC 700721 / MGH 78578).